The sequence spans 461 residues: Steroidogenic factor 1 (461 aa).

A DNA-binding region (nuclear receptor) is located at residues 10 to 85; that stretch reads DELCPVCGDK…VGMRLEAVRA (76 aa). An NR C4-type zinc finger spans residues 13–33; that stretch reads CPVCGDKVSGYHYGLLTCESC. An N6-acetyllysine mark is found at lysine 34, lysine 38, and lysine 72. The segment at 49 to 73 adopts an NR C4-type zinc-finger fold; sequence CTESQSCKIDKTQRKRCPFCRFQKC. Residues 116–158 form a disordered region; the sequence is NGFKLETGPPVGVPPPPPPPPDYMLPHGLHASEPKGLASGPPA. Lysine 119 participates in a covalent cross-link: Glycyl lysine isopeptide (Lys-Gly) (interchain with G-Cter in SUMO). The span at 126–138 shows a compositional bias: pro residues; sequence VGVPPPPPPPPDY. Lysine 194 participates in a covalent cross-link: Glycyl lysine isopeptide (Lys-Gly) (interchain with G-Cter in SUMO). The residue at position 203 (serine 203) is a Phosphoserine; by CDK7. An NR LBD domain is found at 222-459; the sequence is GVPELILQLL…NLLIEMLQAK (238 aa). The tract at residues 230–461 is important for dimerization; that stretch reads LLQLEPDEDQ…LIEMLQAKQT (232 aa). A 1,2-diacyl-sn-glycero-3-phosphocholine contacts are provided by glycine 341, tyrosine 436, and lysine 440.

It belongs to the nuclear hormone receptor family. NR5 subfamily. Binds DNA as a monomer. Part of a complex consisting of SFPQ, NONO and NR5A1. Interacts with NR0B2. Interacts with DGKQ and CDK7. Binds to and activated by HIPK3. Post-translationally, may be regulated by phosphorylation and dephosphorylation. Acetylation stimulates the transcriptional activity. In terms of processing, sumoylation reduces CDK7-mediated phosphorylation on Ser-203. Post-translationally, phosphorylated on Ser-203 by CDK7. This phosphorylation promotes transcriptional activity. Adrenal, ovary, testis, placenta, adipocyte, and brain.

The protein resides in the nucleus. Its function is as follows. Transcriptional activator. Seems to be essential for sexual differentiation and formation of the primary steroidogenic tissues. Binds to the Ad4 site found in the promoter region of steroidogenic P450 genes such as CYP11A, CYP11B and CYP21B. Also regulates the AMH/Muellerian inhibiting substance gene as well as the AHCH and STAR genes. 5'-YCAAGGYC-3' and 5'-RRAGGTCA-3' are the consensus sequences for the recognition by NR5A1. The SFPQ-NONO-NR5A1 complex binds to the CYP17 promoter and regulates basal and cAMP-dependent transcriptional activity. Binds phospholipids with a phosphatidylinositol (PI) headgroup, in particular PI(3,4)P2 and PI(3,4,5)P3. Activated by the phosphorylation of NR5A1 by HIPK3 leading to increased steroidogenic gene expression upon cAMP signaling pathway stimulation. This is Steroidogenic factor 1 (NR5A1) from Bos taurus (Bovine).